The chain runs to 581 residues: MSENVISSSKNVVSKLLYVKDEYWPSVAPAATELISKLINAFWCQTLNGQLVEEDEGERNCIFLFDRCLKTEGCLKKIGPVTVMQFLACFLLSSQNHAYAWSVCRQIPSDDMAFKFTKCFQNSQQFRDANFCKLVLVWTVCQCVSSTVYYPAILDLLPVLSDLVKEMEKDPASLQAKENEFWLKKLIQTSLHHSSDNSLVFYLEMLLDSLDLRNCIYVVFEDEALFRRLKDIGNPEIRMMLDSGLRDWRKQRSGRSSSHVASKGINKVVNINPGDVKSLIELFPQLSVEEAVEHLSASLGNIDAACESVITSSLPEELDSSTHSPIYTKPNVDSMHKQPKKAIAPLSLSSSVTAVISNRTSDKKTRSTVAEEDDITHLNISPDRLYLNKKPEDLNFWKKSVPETDKSRVLNLLAMAEDDEYDDTYDDLDTTGPVDSGVGDDDPEASSKDAHDFQKFINQTLYDFYQQNPEVFDQKARKSKERADLLAKLDNSLTHEQIEGWRRMFTTDSKFAEAVKKEVTFGSGNTNIGSLRQTKFKQSNYTPPELNDGSRQHRPSRPSKNPSLKKKKYVRTKPKKASNEK.

Residues 271-314 (INPGDVKSLIELFPQLSVEEAVEHLSASLGNIDAACESVITSSL) enclose the CUE domain. Residue tyrosine 386 is modified to Phosphotyrosine. Disordered regions lie at residues 422–448 (DDTYDDLDTTGPVDSGVGDDDPEASSK) and 522–581 (GSGN…SNEK). The segment covering 522-542 (GSGNTNIGSLRQTKFKQSNYT) has biased composition (polar residues). Positions 552–581 (QHRPSRPSKNPSLKKKKYVRTKPKKASNEK) are enriched in basic residues.

Component of the RQT (ribosome quality control trigger) complex.

The protein resides in the cytoplasm. It is found in the nucleus. Involved in activation of the ribosome quality control (RQC) pathway, a pathway that degrades nascent peptide chains during problematic translation. Specifically recognizes and binds RPS20/uS10 ubiquitinated by HEL2, promoting recruitment of the RQT (ribosome quality control trigger) complex on stalled ribosomes, followed by disassembly of stalled ribosomes. The protein is CUE domain-containing protein 3 of Schizosaccharomyces pombe (strain 972 / ATCC 24843) (Fission yeast).